Here is a 241-residue protein sequence, read N- to C-terminus: Triosephosphate isomerase (241 aa).

Substrate is bound at residue 9–11 (NWK). Catalysis depends on His-96, which acts as the Electrophile. Glu-165 acts as the Proton acceptor in catalysis. Substrate-binding positions include Gly-171, Ser-204, and 225 to 226 (GG).

This sequence belongs to the triosephosphate isomerase family. In terms of assembly, homodimer.

It is found in the cytoplasm. It carries out the reaction D-glyceraldehyde 3-phosphate = dihydroxyacetone phosphate. It participates in carbohydrate biosynthesis; gluconeogenesis. The protein operates within carbohydrate degradation; glycolysis; D-glyceraldehyde 3-phosphate from glycerone phosphate: step 1/1. In terms of biological role, involved in the gluconeogenesis. Catalyzes stereospecifically the conversion of dihydroxyacetone phosphate (DHAP) to D-glyceraldehyde-3-phosphate (G3P). This is Triosephosphate isomerase from Trichodesmium erythraeum (strain IMS101).